The chain runs to 307 residues: Thymidylate synthase (307 aa).

Residues arginine 26 and 160-161 (RR) contribute to the dUMP site. Cysteine 180 serves as the catalytic Nucleophile. DUMP contacts are provided by residues 209–212 (RSCD), asparagine 220, and 250–252 (HIY). A (6R)-5,10-methylene-5,6,7,8-tetrahydrofolate-binding site is contributed by aspartate 212. Residue alanine 306 participates in (6R)-5,10-methylene-5,6,7,8-tetrahydrofolate binding.

This sequence belongs to the thymidylate synthase family. Bacterial-type ThyA subfamily. As to quaternary structure, homodimer.

The protein resides in the cytoplasm. It catalyses the reaction dUMP + (6R)-5,10-methylene-5,6,7,8-tetrahydrofolate = 7,8-dihydrofolate + dTMP. It participates in pyrimidine metabolism; dTTP biosynthesis. Its function is as follows. Catalyzes the reductive methylation of 2'-deoxyuridine-5'-monophosphate (dUMP) to 2'-deoxythymidine-5'-monophosphate (dTMP) while utilizing 5,10-methylenetetrahydrofolate (mTHF) as the methyl donor and reductant in the reaction, yielding dihydrofolate (DHF) as a by-product. This enzymatic reaction provides an intracellular de novo source of dTMP, an essential precursor for DNA biosynthesis. The polypeptide is Thymidylate synthase (Rhizobium rhizogenes (strain K84 / ATCC BAA-868) (Agrobacterium radiobacter)).